The sequence spans 377 residues: GTPase Obg (377 aa).

An Obg domain is found at 1–159 (MKFVDEATIE…RRLRMELKVL (159 aa)). Residues 127 to 148 (NIHFKSSTNRAPRQWTPGKEGE) form a disordered region. Residues 160–336 (ADVGLLGLPN…LIWALQDYLD (177 aa)) form the OBG-type G domain. GTP-binding positions include 166–173 (GLPNAGKS), 191–195 (FTTLH), 213–216 (DIPG), 288–291 (NKLD), and 317–319 (SGL). Mg(2+)-binding residues include S173 and T193. The tract at residues 339 to 377 (KRKDQDAQDQADGTYVFEDPRFDASRGGAAPATPPGGDE) is disordered.

Belongs to the TRAFAC class OBG-HflX-like GTPase superfamily. OBG GTPase family. Monomer. Mg(2+) serves as cofactor.

The protein localises to the cytoplasm. An essential GTPase which binds GTP, GDP and possibly (p)ppGpp with moderate affinity, with high nucleotide exchange rates and a fairly low GTP hydrolysis rate. Plays a role in control of the cell cycle, stress response, ribosome biogenesis and in those bacteria that undergo differentiation, in morphogenesis control. This Bordetella bronchiseptica (strain ATCC BAA-588 / NCTC 13252 / RB50) (Alcaligenes bronchisepticus) protein is GTPase Obg.